The chain runs to 195 residues: UPF0314 protein RHE_CH03951 (195 aa).

Transmembrane regions (helical) follow at residues 14–34, 64–84, 128–148, and 150–170; these read AFWFVACLAVLVAQIIAEYLM, WYTPSHIIHGFLFYGLGYLIL, DSILNSAMDTVFMCLGFFFAA, and APVALTVVIAIFFEIFTGYVI.

The protein belongs to the UPF0314 family.

Its subcellular location is the cell membrane. This is UPF0314 protein RHE_CH03951 from Rhizobium etli (strain ATCC 51251 / DSM 11541 / JCM 21823 / NBRC 15573 / CFN 42).